Consider the following 297-residue polypeptide: tRNA pseudouridine synthase B (297 aa).

The Nucleophile role is filled by D39.

This sequence belongs to the pseudouridine synthase TruB family. Type 1 subfamily.

It catalyses the reaction uridine(55) in tRNA = pseudouridine(55) in tRNA. In terms of biological role, responsible for synthesis of pseudouridine from uracil-55 in the psi GC loop of transfer RNAs. The protein is tRNA pseudouridine synthase B of Lactobacillus johnsonii (strain CNCM I-12250 / La1 / NCC 533).